A 317-amino-acid chain; its full sequence is Probable cell division protein WhiA (317 aa).

The H-T-H motif DNA-binding region spans 278 to 311; the sequence is SLQGLGELLDPQVGKSGVNHRLRKIGEKADELRQ.

Belongs to the WhiA family.

In terms of biological role, involved in cell division and chromosome segregation. This is Probable cell division protein WhiA from Lachnospira eligens (strain ATCC 27750 / DSM 3376 / VPI C15-48 / C15-B4) (Eubacterium eligens).